The sequence spans 347 residues: GMP reductase (347 aa).

Residue A108–A131 coordinates NADP(+). Positions 181 and 183 each coordinate K(+). Catalysis depends on C186, which acts as the Thioimidate intermediate. I216–V239 is an NADP(+) binding site.

Belongs to the IMPDH/GMPR family. GuaC type 1 subfamily. Homotetramer.

The catalysed reaction is IMP + NH4(+) + NADP(+) = GMP + NADPH + 2 H(+). Catalyzes the irreversible NADPH-dependent deamination of GMP to IMP. It functions in the conversion of nucleobase, nucleoside and nucleotide derivatives of G to A nucleotides, and in maintaining the intracellular balance of A and G nucleotides. This chain is GMP reductase, found in Serratia proteamaculans (strain 568).